We begin with the raw amino-acid sequence, 489 residues long: Glycogen synthase (489 aa).

An ADP-alpha-D-glucose-binding site is contributed by lysine 18.

It belongs to the glycosyltransferase 1 family. Bacterial/plant glycogen synthase subfamily.

It carries out the reaction [(1-&gt;4)-alpha-D-glucosyl](n) + ADP-alpha-D-glucose = [(1-&gt;4)-alpha-D-glucosyl](n+1) + ADP + H(+). Its pathway is glycan biosynthesis; glycogen biosynthesis. In terms of biological role, synthesizes alpha-1,4-glucan chains using ADP-glucose. This Rhodopseudomonas palustris (strain BisB18) protein is Glycogen synthase.